Consider the following 350-residue polypeptide: Geranylgeranyl pyrophosphate synthase (350 aa).

Isopentenyl diphosphate is bound by residues lysine 66, arginine 69, and histidine 98. Aspartate 105 and aspartate 109 together coordinate Mg(2+). A dimethylallyl diphosphate-binding site is contributed by arginine 114. An isopentenyl diphosphate-binding site is contributed by arginine 115. Residues lysine 200, threonine 201, glutamine 236, asparagine 243, and lysine 263 each contribute to the dimethylallyl diphosphate site.

This sequence belongs to the FPP/GGPP synthase family. It depends on Mg(2+) as a cofactor.

It catalyses the reaction isopentenyl diphosphate + dimethylallyl diphosphate = (2E)-geranyl diphosphate + diphosphate. The enzyme catalyses isopentenyl diphosphate + (2E)-geranyl diphosphate = (2E,6E)-farnesyl diphosphate + diphosphate. The catalysed reaction is isopentenyl diphosphate + (2E,6E)-farnesyl diphosphate = (2E,6E,10E)-geranylgeranyl diphosphate + diphosphate. Its pathway is secondary metabolite biosynthesis; terpenoid biosynthesis. Functionally, geranylgeranyl pyrophosphate synthase; part of the gene cluster that mediates the biosynthesis of pleuromutilin, a tricyclic diterpene showing antibacterial properties. The geranylgeranyl diphosphate (GGPP) synthase catalyzes the first step in pleuromutilin biosynthesis. GGPP is then substrate of the premutilin synthase (PS) to yield premutilin. Premutilin synthase is a bifunctional enzyme composed of the fusion of a class II diterpene cyclase (DTC) and a class I diterpene synthase (DTS), with the corresponding domains and active sites containing characteristic aspartate-rich motifs. GGPP is first converted to mutildienyl-diphosphate (MPP) at the class II DTC site. MPP is subsequently further cyclized at the class I DTS site, followed by a 1,5-hydride shift and addition of water prior to terminating deprotonation, to yield premutilin. In addition to the aforementioned GGPP synthase and bifunctional diterpene synthase, the cluster also contains three cytochrome P450 monooxygenases, a short-chain alcohol dehydrogenase, and an acyltransferase, involved in the conversion of premutilin to pleuromutilin. The cytochrome P450 monooxygenases P450-1 and P450-2 hydroxylate premutilin at C-11 and C-3, respectively, producing 11-hydroxypremutilin and 3-hydroxypremutilin. The combination of the actions of both ple5 and ple6 leads to the production of 3,11-dihydroxypremutilin. The short chain dehydrogenase SDR further converts 3,11-dihydroxypremutilin into mutilin. The acetyltransferase ATF then acetylates mutilin to produce 14-O-acetylmutilin. Finally, the cytochrome P450 monooxygenase P450-3 catalyzes hydroxylation on the alpha position of the acetyl side chain of 14-O-acetylmutilin to yield pleuromutilin. The chain is Geranylgeranyl pyrophosphate synthase from Clitopilus passeckerianus (Pleurotus passeckerianus).